The primary structure comprises 225 residues: Chromosome partition protein MukE (225 aa).

The tract at residues 197–225 (RDGEAMPIENHLQLNDETEESQPDSGEEE) is disordered. Over residues 212 to 225 (DETEESQPDSGEEE) the composition is skewed to acidic residues.

The protein belongs to the MukE family. Interacts, and probably forms a ternary complex, with MukF and MukB. The complex formation is stimulated by calcium or magnesium.

Its subcellular location is the cytoplasm. The protein localises to the nucleoid. Functionally, involved in chromosome condensation, segregation and cell cycle progression. May participate in facilitating chromosome segregation by condensation DNA from both sides of a centrally located replisome during cell division. Probably acts via its interaction with MukB and MukF. This is Chromosome partition protein MukE from Salmonella typhi.